The sequence spans 177 residues: O-acetyl-ADP-ribose deacetylase (177 aa).

In terms of domain architecture, Macro spans 1-175 (MKSRIHVLQG…LYNRLLTQQG (175 aa)). Substrate contacts are provided by residues 11-12 (DI), asparagine 25, 33-35 (GVD), and 122-126 (STGVY). Aspartate 35 acts as the Proton acceptor in catalysis.

This sequence belongs to the MacroD-type family. YmdB subfamily. As to quaternary structure, homodimer. Interacts with RNase III.

The catalysed reaction is 3''-O-acetyl-ADP-D-ribose + H2O = ADP-D-ribose + acetate + H(+). It catalyses the reaction 2''-O-acetyl-ADP-D-ribose + H2O = ADP-D-ribose + acetate + H(+). Functionally, deacetylates O-acetyl-ADP ribose to yield ADP-ribose and free acetate. Down-regulates ribonuclease 3 (RNase III) activity. Acts by interacting directly with the region of the ribonuclease that is required for dimerization/activation. This is O-acetyl-ADP-ribose deacetylase from Escherichia fergusonii (strain ATCC 35469 / DSM 13698 / CCUG 18766 / IAM 14443 / JCM 21226 / LMG 7866 / NBRC 102419 / NCTC 12128 / CDC 0568-73).